The chain runs to 379 residues: GDSL esterase/lipase At3g05180 (379 aa).

An N-terminal signal peptide occupies residues 1-27 (METLFHTLLRLLLFVAISHTLSPLAGS). Serine 43 functions as the Nucleophile in the catalytic mechanism. 2 N-linked (GlcNAc...) asparagine glycosylation sites follow: asparagine 294 and asparagine 330. Residues aspartate 349 and histidine 352 contribute to the active site.

It belongs to the 'GDSL' lipolytic enzyme family.

The protein resides in the secreted. In Arabidopsis thaliana (Mouse-ear cress), this protein is GDSL esterase/lipase At3g05180.